A 471-amino-acid polypeptide reads, in one-letter code: V-type ATP synthase beta chain (471 aa).

The protein belongs to the ATPase alpha/beta chains family.

Functionally, produces ATP from ADP in the presence of a proton gradient across the membrane. The V-type beta chain is a regulatory subunit. The sequence is that of V-type ATP synthase beta chain from Streptococcus pyogenes serotype M12 (strain MGAS2096).